A 372-amino-acid chain; its full sequence is GPN-loop GTPase 1 (372 aa).

N-acetylalanine is present on Ala2. 29–34 (GSGKTT) is a GTP binding site. The Gly-Pro-Asn (GPN)-loop; involved in dimer interface motif lies at 86 to 88 (GPN). Position 189-192 (189-192 (NKTD)) interacts with GTP. 2 positions are modified to phosphoserine: Ser301 and Ser314. The disordered stretch occupies residues 303-372 (ALDPEAGKGN…ESMAHWKRNK (70 aa)). The residue at position 328 (Thr328) is a Phosphothreonine. Over residues 330–342 (DEEDEEADSDTDD) the composition is skewed to acidic residues. Residue Ser338 is modified to Phosphoserine. Thr340 is subject to Phosphothreonine. The segment covering 343 to 355 (IDHRVTEESREEP) has biased composition (basic and acidic residues).

This sequence belongs to the GPN-loop GTPase family. Heterodimer with GPN3. Binds to RNA polymerase II (RNAPII). Interacts directly with RNAPII subunits RPB4 and RPB7 and the CTD of RPB1. Interacts with XPA.

The protein localises to the cytoplasm. It localises to the nucleus. Functionally, small GTPase required for proper nuclear import of RNA polymerase II (RNAPII). May act at an RNAP assembly step prior to nuclear import. Forms an interface between the RNA polymerase II enzyme and chaperone/scaffolding proteins, suggesting that it is required to connect RNA polymerase II to regulators of protein complex formation. May be involved in nuclear localization of XPA. This Mus musculus (Mouse) protein is GPN-loop GTPase 1.